Here is a 467-residue protein sequence, read N- to C-terminus: Probable citrate synthase 2, mitochondrial (467 aa).

Residues His303, His349, and Asp404 contribute to the active site.

This sequence belongs to the citrate synthase family. In terms of assembly, homodimer.

The protein resides in the mitochondrion matrix. The enzyme catalyses oxaloacetate + acetyl-CoA + H2O = citrate + CoA + H(+). Its pathway is carbohydrate metabolism; tricarboxylic acid cycle; isocitrate from oxaloacetate: step 1/2. The chain is Probable citrate synthase 2, mitochondrial from Aedes aegypti (Yellowfever mosquito).